The following is a 252-amino-acid chain: Imidazole glycerol phosphate synthase subunit HisF (252 aa).

Residues Asp-11 and Asp-130 contribute to the active site.

Belongs to the HisA/HisF family. In terms of assembly, heterodimer of HisH and HisF.

It localises to the cytoplasm. It carries out the reaction 5-[(5-phospho-1-deoxy-D-ribulos-1-ylimino)methylamino]-1-(5-phospho-beta-D-ribosyl)imidazole-4-carboxamide + L-glutamine = D-erythro-1-(imidazol-4-yl)glycerol 3-phosphate + 5-amino-1-(5-phospho-beta-D-ribosyl)imidazole-4-carboxamide + L-glutamate + H(+). Its pathway is amino-acid biosynthesis; L-histidine biosynthesis; L-histidine from 5-phospho-alpha-D-ribose 1-diphosphate: step 5/9. Functionally, IGPS catalyzes the conversion of PRFAR and glutamine to IGP, AICAR and glutamate. The HisF subunit catalyzes the cyclization activity that produces IGP and AICAR from PRFAR using the ammonia provided by the HisH subunit. The sequence is that of Imidazole glycerol phosphate synthase subunit HisF from Bacillus mycoides (strain KBAB4) (Bacillus weihenstephanensis).